The following is a 165-amino-acid chain: Thiol peroxidase (165 aa).

Residues 17–165 form the Thioredoxin domain; it reads PQVGEIVENF…NYEAALAVLA (149 aa). C59 functions as the Cysteine sulfenic acid (-SOH) intermediate in the catalytic mechanism. C59 and C93 are joined by a disulfide.

The protein belongs to the peroxiredoxin family. Tpx subfamily. As to quaternary structure, homodimer.

The enzyme catalyses a hydroperoxide + [thioredoxin]-dithiol = an alcohol + [thioredoxin]-disulfide + H2O. Functionally, thiol-specific peroxidase that catalyzes the reduction of hydrogen peroxide and organic hydroperoxides to water and alcohols, respectively. Plays a role in cell protection against oxidative stress by detoxifying peroxides. The protein is Thiol peroxidase of Haemophilus influenzae (strain ATCC 51907 / DSM 11121 / KW20 / Rd).